A 416-amino-acid polypeptide reads, in one-letter code: Glutamyl-tRNA reductase (416 aa).

Substrate is bound by residues 49–52 (TCNR), Ser105, 110–112 (EPQ), and Gln116. Cys50 acts as the Nucleophile in catalysis. 185-190 (GAGETI) lines the NADP(+) pocket.

Belongs to the glutamyl-tRNA reductase family. Homodimer.

It catalyses the reaction (S)-4-amino-5-oxopentanoate + tRNA(Glu) + NADP(+) = L-glutamyl-tRNA(Glu) + NADPH + H(+). It functions in the pathway porphyrin-containing compound metabolism; protoporphyrin-IX biosynthesis; 5-aminolevulinate from L-glutamyl-tRNA(Glu): step 1/2. In terms of biological role, catalyzes the NADPH-dependent reduction of glutamyl-tRNA(Glu) to glutamate 1-semialdehyde (GSA). The chain is Glutamyl-tRNA reductase from Shewanella baltica (strain OS185).